A 405-amino-acid chain; its full sequence is Argininosuccinate synthase (405 aa).

ATP is bound by residues 10–18 and A37; that span reads AYSGGLDTS. Residues Y88 and S93 each coordinate L-citrulline. An ATP-binding site is contributed by G118. The L-aspartate site is built by T120, N124, and D125. N124 lines the L-citrulline pocket. L-citrulline is bound by residues R128, S179, S188, E264, and Y276.

It belongs to the argininosuccinate synthase family. Type 1 subfamily. Homotetramer.

It localises to the cytoplasm. The catalysed reaction is L-citrulline + L-aspartate + ATP = 2-(N(omega)-L-arginino)succinate + AMP + diphosphate + H(+). It functions in the pathway amino-acid biosynthesis; L-arginine biosynthesis; L-arginine from L-ornithine and carbamoyl phosphate: step 2/3. This chain is Argininosuccinate synthase, found in Pseudomonas fluorescens (strain Pf0-1).